The primary structure comprises 452 residues: Dimethyladenosine transferase 2, mitochondrial (452 aa).

The S-adenosyl-L-methionine site is built by isoleucine 46, glutamate 99, and aspartate 125. Positions 408–452 (ANDEPNLEDGVTLPEEDDAEADEIIEEESPVPATTPVKRRRKASS) are disordered. A compositionally biased stretch (acidic residues) spans 421-436 (PEEDDAEADEIIEEES).

The protein belongs to the class I-like SAM-binding methyltransferase superfamily. rRNA adenine N(6)-methyltransferase family. KsgA subfamily.

The protein localises to the mitochondrion. Probable S-adenosyl-L-methionine-dependent methyltransferase which specifically dimethylates mitochondrial 12S rRNA at the conserved stem loop. Also required for basal transcription of mitochondrial DNA. Also regulates mitochondrial DNA copy number. Stimulates transcription independently of the methyltransferase activity. The chain is Dimethyladenosine transferase 2, mitochondrial (mtTFB2) from Drosophila melanogaster (Fruit fly).